Consider the following 252-residue polypeptide: Small ribosomal subunit protein uS3 (252 aa).

Residues 39 to 111 (IRKLINNFAK…DVNLNVLEVK (73 aa)) enclose the KH type-2 domain. Residues 226 to 252 (SQSSNNPNRRPRNFKGGNNNHVNAKKN) are disordered.

The protein belongs to the universal ribosomal protein uS3 family. In terms of assembly, part of the 30S ribosomal subunit. Forms a tight complex with proteins S10 and S14.

Functionally, binds the lower part of the 30S subunit head. Binds mRNA in the 70S ribosome, positioning it for translation. This chain is Small ribosomal subunit protein uS3, found in Aster yellows witches'-broom phytoplasma (strain AYWB).